The following is a 640-amino-acid chain: 1-deoxy-D-xylulose-5-phosphate synthase (640 aa).

Residues histidine 79 and 120–122 contribute to the thiamine diphosphate site; that span reads GHS. Aspartate 151 provides a ligand contact to Mg(2+). Residues 152–153, asparagine 180, tyrosine 288, and glutamate 372 contribute to the thiamine diphosphate site; that span reads GG. Asparagine 180 contributes to the Mg(2+) binding site.

The protein belongs to the transketolase family. DXPS subfamily. Homodimer. It depends on Mg(2+) as a cofactor. Thiamine diphosphate serves as cofactor.

It catalyses the reaction D-glyceraldehyde 3-phosphate + pyruvate + H(+) = 1-deoxy-D-xylulose 5-phosphate + CO2. Its pathway is metabolic intermediate biosynthesis; 1-deoxy-D-xylulose 5-phosphate biosynthesis; 1-deoxy-D-xylulose 5-phosphate from D-glyceraldehyde 3-phosphate and pyruvate: step 1/1. In terms of biological role, catalyzes the acyloin condensation reaction between C atoms 2 and 3 of pyruvate and glyceraldehyde 3-phosphate to yield 1-deoxy-D-xylulose-5-phosphate (DXP). The chain is 1-deoxy-D-xylulose-5-phosphate synthase from Nitrosococcus oceani (strain ATCC 19707 / BCRC 17464 / JCM 30415 / NCIMB 11848 / C-107).